Here is a 440-residue protein sequence, read N- to C-terminus: Proline--tRNA ligase (440 aa).

It belongs to the class-II aminoacyl-tRNA synthetase family. ProS type 2 subfamily. As to quaternary structure, homodimer.

Its subcellular location is the cytoplasm. It catalyses the reaction tRNA(Pro) + L-proline + ATP = L-prolyl-tRNA(Pro) + AMP + diphosphate. Its function is as follows. Catalyzes the attachment of proline to tRNA(Pro) in a two-step reaction: proline is first activated by ATP to form Pro-AMP and then transferred to the acceptor end of tRNA(Pro). The protein is Proline--tRNA ligase of Rhizobium etli (strain ATCC 51251 / DSM 11541 / JCM 21823 / NBRC 15573 / CFN 42).